The primary structure comprises 626 residues: Lipoprotein LpqB (626 aa).

Residues 1–23 form the signal peptide; that stretch reads MIGQANRIAAAVSTACLAVLLAG. Cysteine 24 is lipidated: N-palmitoyl cysteine. A lipid anchor (S-diacylglycerol cysteine) is attached at cysteine 24. The segment at 428 to 457 is disordered; sequence EAEREEDLADDTEPGDTAVGSTERRETDRG. Over residues 430–441 the composition is skewed to acidic residues; it reads EREEDLADDTEP.

Belongs to the LpqB lipoprotein family.

The protein resides in the cell membrane. This is Lipoprotein LpqB from Thermobifida fusca (strain YX).